A 206-amino-acid chain; its full sequence is Ras-related protein Ral-A (206 aa).

21 to 28 (GSGGVGKS) provides a ligand contact to GTP. The short motif at 43–51 (YEPTKADSY) is the Effector region element. GTP contacts are provided by residues 68–72 (DTAGQ) and 127–130 (NKSD). Serine 194 is subject to Phosphoserine. Cysteine 203 is modified (cysteine methyl ester). Residue cysteine 203 is the site of S-geranylgeranyl cysteine attachment. A propeptide spans 204-206 (CIL) (removed in mature form).

This sequence belongs to the small GTPase superfamily. Ras family. As to quaternary structure, interacts (via effector domain) with RALBP1; during mitosis, recruits RALBP1 to the mitochondrion where it promotes DNM1L phosphorylation and mitochondrial fission. Interacts with EXOC2/Sec5 and EXOC8/Exo84; binding to EXOC2 and EXOC8 is mutually exclusive. Interacts with Clostridium exoenzyme C3. Interacts with RALGPS1. Interacts with LPAR1 and LPAR2. Interacts with GRK2 in response to LPAR1 activation. RALA and GRK2 binding to LPAR1 is mutually exclusive. Interacts with CDC42. In terms of processing, prenylation is essential for membrane localization. Post-translationally, phosphorylated. Phosphorylation at Ser-194 by AURKA/Aurora kinase A, during mitosis, induces RALA localization to the mitochondrion where it regulates mitochondrial fission.

It localises to the cell membrane. It is found in the cleavage furrow. Its subcellular location is the midbody. The protein localises to the midbody ring. The protein resides in the mitochondrion. It catalyses the reaction GTP + H2O = GDP + phosphate + H(+). Alternates between an inactive form bound to GDP and an active form bound to GTP. Activated by a guanine nucleotide-exchange factor (GEF) and inactivated by a GTPase-activating protein (GAP). Functionally, multifunctional GTPase involved in a variety of cellular processes including gene expression, cell migration, cell proliferation, oncogenic transformation and membrane trafficking. Accomplishes its multiple functions by interacting with distinct downstream effectors. Acts as a GTP sensor for GTP-dependent exocytosis of dense core vesicles. Key regulator of LPAR1 signaling and competes with GRK2 for binding to LPAR1 thus affecting the signaling properties of the receptor. Required for anchorage-independent proliferation of transformed cells. The RALA-exocyst complex regulates integrin-dependent membrane raft exocytosis and growth signaling. During mitosis, supports the stabilization and elongation of the intracellular bridge between dividing cells. Cooperates with EXOC2 to recruit other components of the exocyst to the early midbody. During mitosis, also controls mitochondrial fission by recruiting to the mitochondrion RALBP1, which mediates the phosphorylation and activation of DNM1L by the mitotic kinase cyclin B-CDK1. This Mus musculus (Mouse) protein is Ras-related protein Ral-A (Rala).